A 192-amino-acid polypeptide reads, in one-letter code: Probable cobalt-precorrin-6B C(15)-methyltransferase (decarboxylating) (192 aa).

S-adenosyl-L-methionine-binding positions include Thr-17, Gly-41 to Gly-45, Asp-62, and Ala-91.

It belongs to the methyltransferase superfamily. Archaeal-type CbiT family. Homotetramer.

The enzyme catalyses Co-precorrin-6B + S-adenosyl-L-methionine = Co-precorrin-7 + S-adenosyl-L-homocysteine + CO2. The protein operates within cofactor biosynthesis; adenosylcobalamin biosynthesis; cob(II)yrinate a,c-diamide from sirohydrochlorin (anaerobic route): step 8/10. Functionally, catalyzes the methylation of C-15 in cobalt-precorrin-6B followed by the decarboxylation of C-12 to form cobalt-precorrin-7. In Methanothermobacter thermautotrophicus (strain ATCC 29096 / DSM 1053 / JCM 10044 / NBRC 100330 / Delta H) (Methanobacterium thermoautotrophicum), this protein is Probable cobalt-precorrin-6B C(15)-methyltransferase (decarboxylating).